The chain runs to 254 residues: Type III pantothenate kinase (254 aa).

6–13 (DVGNSNIV) contributes to the ATP binding site. Residues Y100 and 107-110 (GADR) contribute to the substrate site. D109 serves as the catalytic Proton acceptor. Position 129 (D129) interacts with K(+). Residue T132 coordinates ATP. A substrate-binding site is contributed by T184.

Belongs to the type III pantothenate kinase family. As to quaternary structure, homodimer. It depends on NH4(+) as a cofactor. The cofactor is K(+).

The protein localises to the cytoplasm. The enzyme catalyses (R)-pantothenate + ATP = (R)-4'-phosphopantothenate + ADP + H(+). Its pathway is cofactor biosynthesis; coenzyme A biosynthesis; CoA from (R)-pantothenate: step 1/5. Functionally, catalyzes the phosphorylation of pantothenate (Pan), the first step in CoA biosynthesis. This is Type III pantothenate kinase from Pelobacter propionicus (strain DSM 2379 / NBRC 103807 / OttBd1).